The sequence spans 94 residues: ATP synthase F(0) complex subunit f, mitochondrial (94 aa).

An N-acetylalanine modification is found at Ala2. Residue Ser3 is modified to Phosphoserine. An N6-acetyllysine modification is found at Lys22. The chain crosses the membrane as a helical span at residues 68-85 (MVLACYVLFSYSFSYKHL).

This sequence belongs to the ATPase F chain family. Component of the ATP synthase complex composed at least of ATP5F1A/subunit alpha, ATP5F1B/subunit beta, ATP5MC1/subunit c (homooctomer), MT-ATP6/subunit a, MT-ATP8/subunit 8, ATP5ME/subunit e, ATP5MF/subunit f, ATP5MG/subunit g, ATP5MK/subunit k, ATP5MJ/subunit j, ATP5F1C/subunit gamma, ATP5F1D/subunit delta, ATP5F1E/subunit epsilon, ATP5PF/subunit F6, ATP5PB/subunit b, ATP5PD/subunit d, ATP5PO/subunit OSCP. ATP synthase complex consists of a soluble F(1) head domain (subunits alpha(3) and beta(3)) - the catalytic core - and a membrane F(0) domain - the membrane proton channel (subunits c, a, 8, e, f, g, k and j). These two domains are linked by a central stalk (subunits gamma, delta, and epsilon) rotating inside the F1 region and a stationary peripheral stalk (subunits F6, b, d, and OSCP).

Its subcellular location is the mitochondrion. It localises to the mitochondrion inner membrane. Subunit f, of the mitochondrial membrane ATP synthase complex (F(1)F(0) ATP synthase or Complex V) that produces ATP from ADP in the presence of a proton gradient across the membrane which is generated by electron transport complexes of the respiratory chain. ATP synthase complex consist of a soluble F(1) head domain - the catalytic core - and a membrane F(1) domain - the membrane proton channel. These two domains are linked by a central stalk rotating inside the F(1) region and a stationary peripheral stalk. During catalysis, ATP synthesis in the catalytic domain of F(1) is coupled via a rotary mechanism of the central stalk subunits to proton translocation. In vivo, can only synthesize ATP although its ATP hydrolase activity can be activated artificially in vitro. Part of the complex F(0) domain. This is ATP synthase F(0) complex subunit f, mitochondrial from Pongo abelii (Sumatran orangutan).